Here is a 140-residue protein sequence, read N- to C-terminus: Ribosome-binding factor A (140 aa).

Residues 118-133 are compositionally biased toward basic and acidic residues; sequence DEAKQQKHNGKDKTDT. The segment at 118–140 is disordered; sequence DEAKQQKHNGKDKTDTADSEGEE.

The protein belongs to the RbfA family. As to quaternary structure, monomer. Binds 30S ribosomal subunits, but not 50S ribosomal subunits or 70S ribosomes.

It is found in the cytoplasm. Functionally, one of several proteins that assist in the late maturation steps of the functional core of the 30S ribosomal subunit. Associates with free 30S ribosomal subunits (but not with 30S subunits that are part of 70S ribosomes or polysomes). Required for efficient processing of 16S rRNA. May interact with the 5'-terminal helix region of 16S rRNA. The protein is Ribosome-binding factor A of Shewanella woodyi (strain ATCC 51908 / MS32).